We begin with the raw amino-acid sequence, 419 residues long: Enolase (419 aa).

Gln161 is a binding site for (2R)-2-phosphoglycerate. Glu205 functions as the Proton donor in the catalytic mechanism. Positions 240, 283, and 309 each coordinate Mg(2+). Residues Lys334, Arg363, Ser364, and Lys385 each contribute to the (2R)-2-phosphoglycerate site. Lys334 (proton acceptor) is an active-site residue.

The protein belongs to the enolase family. Requires Mg(2+) as cofactor.

It localises to the cytoplasm. The protein localises to the secreted. Its subcellular location is the cell surface. It carries out the reaction (2R)-2-phosphoglycerate = phosphoenolpyruvate + H2O. The protein operates within carbohydrate degradation; glycolysis; pyruvate from D-glyceraldehyde 3-phosphate: step 4/5. Functionally, catalyzes the reversible conversion of 2-phosphoglycerate (2-PG) into phosphoenolpyruvate (PEP). It is essential for the degradation of carbohydrates via glycolysis. This Saccharolobus solfataricus (strain ATCC 35092 / DSM 1617 / JCM 11322 / P2) (Sulfolobus solfataricus) protein is Enolase.